We begin with the raw amino-acid sequence, 492 residues long: GMP reductase (492 aa).

Residues 30 to 31 (SR) and Arg78 contribute to the NADP(+) site. CBS domains follow at residues 99–162 (LIED…LVET) and 164–223 (MTPV…LNAT). NADP(+) contacts are provided by residues 260–262 (DIA) and 313–314 (VG). Gly314, Gly316, and Cys319 together coordinate K(+). Catalysis depends on Cys319, which acts as the Thioimidate intermediate. Catalysis depends on Thr321, which acts as the Proton donor/acceptor. Arg322 lines the K(+) pocket. GMP contacts are provided by residues 352 to 354 (DGG), 375 to 376 (GN), and 401 to 403 (GMA). NADP(+) contacts are provided by residues Met402 and 454–457 (SGIS). The short motif at 490–492 (SKL) is the Microbody targeting signal element.

It belongs to the IMPDH/GMPR family. GuaC type 1 subfamily. Homotetramer.

The protein resides in the glycosome. It carries out the reaction IMP + NH4(+) + NADP(+) = GMP + NADPH + 2 H(+). With respect to regulation, activated by GTP and inhibited by ATP and IMP. Mycophenolic acid (MPA) is a competitive inhibitor of the enzyme with respect to NADPH. Functionally, catalyzes the irreversible NADPH-dependent deamination of GMP to IMP. It functions in the conversion of nucleobase, nucleoside and nucleotide derivatives of G to A nucleotides, and in maintaining the intracellular balance of A and G nucleotides. This is GMP reductase from Leishmania major.